The following is a 275-amino-acid chain: MHAVQRQIAEQLKVQPPFADQNALQAEVARRVSFIKECLQNARLKTLVLGISGGVDSLTAGLLAQRAVKELRASTGDNSYRFIAVRLPYVVQADEHEAQASVDFIEPDERHTINIGSSVKALAAEVKAFDGLPASSVDFVLGNTKARMRMVAQYTVAGAYQGLVIGTDHAAEAVMGFFTKFGDGACDLAPLSGLVKNQVRAIARHFGAPESLVEKVPTADLEDLSPGKPDEASHGVTYAEIDAFLHGEPVREEAFKIICETYAKTQHKRELPYAP.

50–57 (GISGGVDS) is a binding site for ATP. Residue aspartate 56 coordinates Mg(2+). Residue arginine 147 participates in deamido-NAD(+) binding. Threonine 167 contacts ATP. Glutamate 172 contributes to the Mg(2+) binding site. 2 residues coordinate deamido-NAD(+): lysine 180 and aspartate 187. ATP contacts are provided by lysine 196 and threonine 218. 267 to 268 (HK) serves as a coordination point for deamido-NAD(+).

This sequence belongs to the NAD synthetase family. In terms of assembly, homodimer.

The enzyme catalyses deamido-NAD(+) + NH4(+) + ATP = AMP + diphosphate + NAD(+) + H(+). The protein operates within cofactor biosynthesis; NAD(+) biosynthesis; NAD(+) from deamido-NAD(+) (ammonia route): step 1/1. Catalyzes the ATP-dependent amidation of deamido-NAD to form NAD. Uses ammonia as a nitrogen source. In Pseudomonas savastanoi pv. phaseolicola (strain 1448A / Race 6) (Pseudomonas syringae pv. phaseolicola (strain 1448A / Race 6)), this protein is NH(3)-dependent NAD(+) synthetase.